Reading from the N-terminus, the 931-residue chain is Protein translocase subunit SecA (931 aa).

ATP contacts are provided by residues Gln87, 105-109 (GEGKT), and Asp515. Zn(2+)-binding residues include Cys915, Cys917, Cys926, and His927.

It belongs to the SecA family. As to quaternary structure, monomer and homodimer. Part of the essential Sec protein translocation apparatus which comprises SecA, SecYEG and auxiliary proteins SecDF-YajC and YidC. Zn(2+) serves as cofactor.

It is found in the cell inner membrane. It localises to the cytoplasm. It catalyses the reaction ATP + H2O + cellular proteinSide 1 = ADP + phosphate + cellular proteinSide 2.. Its function is as follows. Part of the Sec protein translocase complex. Interacts with the SecYEG preprotein conducting channel. Has a central role in coupling the hydrolysis of ATP to the transfer of proteins into and across the cell membrane, serving both as a receptor for the preprotein-SecB complex and as an ATP-driven molecular motor driving the stepwise translocation of polypeptide chains across the membrane. The protein is Protein translocase subunit SecA of Burkholderia pseudomallei (strain K96243).